The primary structure comprises 213 residues: Orotate phosphoribosyltransferase (213 aa).

Residue Lys26 participates in 5-phospho-alpha-D-ribose 1-diphosphate binding. 34–35 contacts orotate; sequence FF. 5-phospho-alpha-D-ribose 1-diphosphate-binding positions include 72-73, Arg99, Lys100, Lys103, His105, and 124-132; these read YK and DDVITAGTA. Residues Thr128 and Arg156 each coordinate orotate.

This sequence belongs to the purine/pyrimidine phosphoribosyltransferase family. PyrE subfamily. As to quaternary structure, homodimer. Mg(2+) serves as cofactor.

It catalyses the reaction orotidine 5'-phosphate + diphosphate = orotate + 5-phospho-alpha-D-ribose 1-diphosphate. Its pathway is pyrimidine metabolism; UMP biosynthesis via de novo pathway; UMP from orotate: step 1/2. Its function is as follows. Catalyzes the transfer of a ribosyl phosphate group from 5-phosphoribose 1-diphosphate to orotate, leading to the formation of orotidine monophosphate (OMP). The sequence is that of Orotate phosphoribosyltransferase from Photobacterium profundum (strain SS9).